A 474-amino-acid polypeptide reads, in one-letter code: Sulfide dehydrogenase subunit alpha (474 aa).

The propeptide occupies 1-2; sequence MP. Residues cysteine 42, cysteine 45, cysteine 52, and cysteine 56 each coordinate [4Fe-4S] cluster. The [3Fe-4S] cluster site is built by cysteine 101, cysteine 107, and cysteine 111.

Heterodimer of alpha and beta subunits. The cofactor is FAD. It depends on [3Fe-4S] cluster as a cofactor. [4Fe-4S] cluster serves as cofactor.

It localises to the cytoplasm. It carries out the reaction n sulfur + hydrogen sulfide + NADP(+) = (n+1) sulfur + NADPH. The enzyme catalyses 2 reduced [2Fe-2S]-[ferredoxin] + NADP(+) + H(+) = 2 oxidized [2Fe-2S]-[ferredoxin] + NADPH. Its function is as follows. A bifunctional enzyme that catalyzes the reduction of elemental sulfur or polysulfide to hydrogen sulfide with NADPH as electron donor. Also functions as a reduced ferredoxin:NADP oxidoreductase with a very high affinity for reduced ferredoxin. Exhibits a broad specificity for various physiological and non-physiological substrates with varied reduction potentials such as methyl viologen, benzyl viologen, FAD, FMN, methylene blue, 2,6-dichlorophenolindophenol (DCIP), cytochrome C and ferricyanide with highest preference for benzyl viologen. Does not reduce fumarate, succinate, nitrate, nitrite, sulfate, sulfite or protons. Does not possess any hydrogenase activity or NADPH-dependent glutamate synthase activity. This is Sulfide dehydrogenase subunit alpha from Pyrococcus furiosus (strain ATCC 43587 / DSM 3638 / JCM 8422 / Vc1).